Reading from the N-terminus, the 340-residue chain is Glyceraldehyde-3-phosphate dehydrogenase (340 aa).

NAD(+) is bound by residues 11–12 (TI) and Gly109. 138–140 (SCN) lines the D-glyceraldehyde 3-phosphate pocket. Cys139 functions as the Nucleophile in the catalytic mechanism. Residue Arg167 coordinates NAD(+). Position 193–194 (193–194 (HA)) interacts with D-glyceraldehyde 3-phosphate. Gln300 is a binding site for NAD(+).

The protein belongs to the glyceraldehyde-3-phosphate dehydrogenase family. In terms of assembly, homotetramer.

The protein localises to the cytoplasm. It carries out the reaction D-glyceraldehyde 3-phosphate + phosphate + NADP(+) = (2R)-3-phospho-glyceroyl phosphate + NADPH + H(+). The enzyme catalyses D-glyceraldehyde 3-phosphate + phosphate + NAD(+) = (2R)-3-phospho-glyceroyl phosphate + NADH + H(+). Its pathway is carbohydrate degradation; glycolysis; pyruvate from D-glyceraldehyde 3-phosphate: step 1/5. The protein is Glyceraldehyde-3-phosphate dehydrogenase of Metallosphaera sedula (strain ATCC 51363 / DSM 5348 / JCM 9185 / NBRC 15509 / TH2).